A 427-amino-acid chain; its full sequence is Glutamate-1-semialdehyde 2,1-aminomutase (427 aa).

Position 265 is an N6-(pyridoxal phosphate)lysine (K265).

It belongs to the class-III pyridoxal-phosphate-dependent aminotransferase family. HemL subfamily. As to quaternary structure, homodimer. Pyridoxal 5'-phosphate is required as a cofactor.

The protein localises to the cytoplasm. The catalysed reaction is (S)-4-amino-5-oxopentanoate = 5-aminolevulinate. It functions in the pathway porphyrin-containing compound metabolism; protoporphyrin-IX biosynthesis; 5-aminolevulinate from L-glutamyl-tRNA(Glu): step 2/2. The protein is Glutamate-1-semialdehyde 2,1-aminomutase of Actinobacillus succinogenes (strain ATCC 55618 / DSM 22257 / CCUG 43843 / 130Z).